The sequence spans 545 residues: Methionine--tRNA ligase (545 aa).

The 'HIGH' region motif lies at 10–20; the sequence is PYANGSLHIGH. 4 residues coordinate Zn(2+): cysteine 141, cysteine 144, cysteine 153, and cysteine 156. The 'KMSKS' region signature appears at 329–333; sequence KISTS. Threonine 332 contributes to the ATP binding site.

It belongs to the class-I aminoacyl-tRNA synthetase family. MetG type 1 subfamily. Monomer. It depends on Zn(2+) as a cofactor.

It is found in the cytoplasm. The enzyme catalyses tRNA(Met) + L-methionine + ATP = L-methionyl-tRNA(Met) + AMP + diphosphate. Functionally, is required not only for elongation of protein synthesis but also for the initiation of all mRNA translation through initiator tRNA(fMet) aminoacylation. This Streptococcus pneumoniae (strain 70585) protein is Methionine--tRNA ligase.